Reading from the N-terminus, the 203-residue chain is Small ribosomal subunit protein uS4 (203 aa).

The segment at 20–44 (LPGLTRKRPKNTNPPGMHGAERKKK) is disordered. The region spanning 92–155 (MRLDCIVFRL…SSRKLVAAYA (64 aa)) is the S4 RNA-binding domain.

It belongs to the universal ribosomal protein uS4 family. As to quaternary structure, part of the 30S ribosomal subunit. Contacts protein S5. The interaction surface between S4 and S5 is involved in control of translational fidelity.

In terms of biological role, one of the primary rRNA binding proteins, it binds directly to 16S rRNA where it nucleates assembly of the body of the 30S subunit. Functionally, with S5 and S12 plays an important role in translational accuracy. This chain is Small ribosomal subunit protein uS4, found in Synechococcus sp. (strain JA-2-3B'a(2-13)) (Cyanobacteria bacterium Yellowstone B-Prime).